The primary structure comprises 374 residues: Alcohol dehydrogenase class-3 (374 aa).

Position 2 is an N-acetylalanine (Ala-2). Residues Cys-45, His-67, Cys-97, Cys-100, Cys-103, Cys-111, and Cys-174 each coordinate Zn(2+). Lys-233 is modified (N6-succinyllysine). At Ser-247 the chain carries Phosphoserine. Lys-315 is subject to N6-succinyllysine. The residue at position 324 (Ser-324) is a Phosphoserine.

The protein belongs to the zinc-containing alcohol dehydrogenase family. Class-III subfamily. As to quaternary structure, homodimer. The cofactor is Zn(2+).

Its subcellular location is the cytoplasm. It carries out the reaction a primary alcohol + NAD(+) = an aldehyde + NADH + H(+). The enzyme catalyses a secondary alcohol + NAD(+) = a ketone + NADH + H(+). The catalysed reaction is S-(hydroxymethyl)glutathione + NADP(+) = S-formylglutathione + NADPH + H(+). It catalyses the reaction S-(hydroxymethyl)glutathione + NAD(+) = S-formylglutathione + NADH + H(+). It carries out the reaction 20-oxo-(5Z,8Z,11Z,14Z)-eicosatetraenoate + NAD(+) + H2O = (5Z,8Z,11Z,14Z)-eicosatetraenedioate + NADH + 2 H(+). The enzyme catalyses 20-hydroxy-(5Z,8Z,11Z,14Z)-eicosatetraenoate + NAD(+) = 20-oxo-(5Z,8Z,11Z,14Z)-eicosatetraenoate + NADH + H(+). The catalysed reaction is S-nitrosoglutathione + NADH + H(+) = S-(hydroxysulfenamide)glutathione + NAD(+). In terms of biological role, catalyzes the oxidation of long-chain primary alcohols and the oxidation of S-(hydroxymethyl) glutathione. Also oxidizes long chain omega-hydroxy fatty acids, such as 20-HETE, producing both the intermediate aldehyde, 20-oxoarachidonate and the end product, a dicarboxylic acid, (5Z,8Z,11Z,14Z)-eicosatetraenedioate. Class-III ADH is remarkably ineffective in oxidizing ethanol. Required for clearance of cellular formaldehyde, a cytotoxic and carcinogenic metabolite that induces DNA damage. Also acts as a S-nitroso-glutathione reductase by catalyzing the NADH-dependent reduction of S-nitrosoglutathione, thereby regulating protein S-nitrosylation. This is Alcohol dehydrogenase class-3 from Bos taurus (Bovine).